We begin with the raw amino-acid sequence, 311 residues long: Ribosomal RNA small subunit methyltransferase H (311 aa).

S-adenosyl-L-methionine is bound by residues 41 to 43, Asp-61, Phe-85, Asp-102, and Gln-109; that span reads GGH.

The protein belongs to the methyltransferase superfamily. RsmH family.

The protein resides in the cytoplasm. It carries out the reaction cytidine(1402) in 16S rRNA + S-adenosyl-L-methionine = N(4)-methylcytidine(1402) in 16S rRNA + S-adenosyl-L-homocysteine + H(+). In terms of biological role, specifically methylates the N4 position of cytidine in position 1402 (C1402) of 16S rRNA. This Paracidovorax citrulli (strain AAC00-1) (Acidovorax citrulli) protein is Ribosomal RNA small subunit methyltransferase H.